The chain runs to 311 residues: Aspartate carbamoyltransferase catalytic subunit (311 aa).

Carbamoyl phosphate contacts are provided by Arg-59 and Thr-60. Residue Lys-87 coordinates L-aspartate. Positions 109, 139, and 142 each coordinate carbamoyl phosphate. 2 residues coordinate L-aspartate: Arg-172 and Arg-224. Residues Ala-265 and Pro-266 each coordinate carbamoyl phosphate.

This sequence belongs to the aspartate/ornithine carbamoyltransferase superfamily. ATCase family. As to quaternary structure, heterododecamer (2C3:3R2) of six catalytic PyrB chains organized as two trimers (C3), and six regulatory PyrI chains organized as three dimers (R2).

The enzyme catalyses carbamoyl phosphate + L-aspartate = N-carbamoyl-L-aspartate + phosphate + H(+). Its pathway is pyrimidine metabolism; UMP biosynthesis via de novo pathway; (S)-dihydroorotate from bicarbonate: step 2/3. In terms of biological role, catalyzes the condensation of carbamoyl phosphate and aspartate to form carbamoyl aspartate and inorganic phosphate, the committed step in the de novo pyrimidine nucleotide biosynthesis pathway. The sequence is that of Aspartate carbamoyltransferase catalytic subunit from Streptococcus pyogenes serotype M18 (strain MGAS8232).